The following is a 139-amino-acid chain: D-ribose pyranase (139 aa).

The Proton donor role is filled by H20. Residues D28, H106, and 128-130 (YAN) contribute to the substrate site.

It belongs to the RbsD / FucU family. RbsD subfamily. Homodecamer.

The protein localises to the cytoplasm. The catalysed reaction is beta-D-ribopyranose = beta-D-ribofuranose. Its pathway is carbohydrate metabolism; D-ribose degradation; D-ribose 5-phosphate from beta-D-ribopyranose: step 1/2. Catalyzes the interconversion of beta-pyran and beta-furan forms of D-ribose. This Escherichia coli O81 (strain ED1a) protein is D-ribose pyranase.